A 123-amino-acid chain; its full sequence is Small ribosomal subunit protein uS13 (123 aa).

This sequence belongs to the universal ribosomal protein uS13 family. In terms of assembly, part of the 30S ribosomal subunit. Forms a loose heterodimer with protein S19. Forms two bridges to the 50S subunit in the 70S ribosome.

Its function is as follows. Located at the top of the head of the 30S subunit, it contacts several helices of the 16S rRNA. In the 70S ribosome it contacts the 23S rRNA (bridge B1a) and protein L5 of the 50S subunit (bridge B1b), connecting the 2 subunits; these bridges are implicated in subunit movement. Contacts the tRNAs in the A and P-sites. The chain is Small ribosomal subunit protein uS13 from Neorickettsia sennetsu (strain ATCC VR-367 / Miyayama) (Ehrlichia sennetsu).